The following is a 383-amino-acid chain: Succinyl-diaminopimelate desuccinylase (383 aa).

Histidine 73 serves as a coordination point for Zn(2+). Aspartate 75 is an active-site residue. A Zn(2+)-binding site is contributed by aspartate 107. Glutamate 141 functions as the Proton acceptor in the catalytic mechanism. 3 residues coordinate Zn(2+): glutamate 142, glutamate 170, and histidine 356.

Belongs to the peptidase M20A family. DapE subfamily. As to quaternary structure, homodimer. Requires Zn(2+) as cofactor. It depends on Co(2+) as a cofactor.

It catalyses the reaction N-succinyl-(2S,6S)-2,6-diaminopimelate + H2O = (2S,6S)-2,6-diaminopimelate + succinate. It participates in amino-acid biosynthesis; L-lysine biosynthesis via DAP pathway; LL-2,6-diaminopimelate from (S)-tetrahydrodipicolinate (succinylase route): step 3/3. In terms of biological role, catalyzes the hydrolysis of N-succinyl-L,L-diaminopimelic acid (SDAP), forming succinate and LL-2,6-diaminopimelate (DAP), an intermediate involved in the bacterial biosynthesis of lysine and meso-diaminopimelic acid, an essential component of bacterial cell walls. This chain is Succinyl-diaminopimelate desuccinylase, found in Pseudomonas putida (strain W619).